A 439-amino-acid chain; its full sequence is Xylose isomerase (439 aa).

Residues histidine 101 and aspartate 104 contribute to the active site. Mg(2+)-binding residues include glutamate 232, glutamate 268, histidine 271, aspartate 296, aspartate 307, aspartate 309, and aspartate 339.

The protein belongs to the xylose isomerase family. As to quaternary structure, homotetramer. Mg(2+) is required as a cofactor.

It is found in the cytoplasm. The catalysed reaction is alpha-D-xylose = alpha-D-xylulofuranose. The polypeptide is Xylose isomerase (Haemophilus influenzae (strain PittEE)).